A 399-amino-acid polypeptide reads, in one-letter code: Dof zinc finger protein DOF5.1 (399 aa).

The segment at 95–149 adopts a Dof-type zinc-finger fold; the sequence is LKCPRCDSTNTKFCYFNNYSLTQPRHFCKACRRYWTRGGALRSVPVGGGCRRNKR. Residues Cys97, Cys100, Cys122, and Cys125 each coordinate Zn(2+). A disordered region spans residues 139–176; it reads PVGGGCRRNKRTKNSSGGGGGSTSSGNSKSQDSATSND.

Expressed ubiquitously, especially in the vascular tissues, except in seeds, petals and anthers. Specific to the vascular tissues in young leaves, cotyledons and flower buds. The PEAR proteins (e.g. DOF2.4, DOF5.1, DOF3.2, DOF1.1, DOF5.6 and DOF5.3) form a short-range concentration gradient that peaks at protophloem sieve elements (PSE).

It localises to the nucleus. In terms of biological role, transcription factor that binds specifically to a 5'-AA[AG]G-3' consensus core sequence. Binds to 5'-TAAAGT-3' motif in REV promoter to triggers its transcription, thus regulating adaxial-abaxial polarity and influencing leaf axial patterning in an auxin transport- and response-dependent manner (e.g. IAA6 and IAA19 genes expression). Probably involved in early processes for vascular development. The PEAR proteins (e.g. DOF2.4, DOF5.1, DOF3.2, DOF1.1, DOF5.6 and DOF5.3) activate gene expression that promotes radial growth of protophloem sieve elements. The sequence is that of Dof zinc finger protein DOF5.1 from Arabidopsis thaliana (Mouse-ear cress).